The sequence spans 274 residues: 2,3,4,5-tetrahydropyridine-2,6-dicarboxylate N-succinyltransferase (274 aa).

Substrate contacts are provided by arginine 104 and aspartate 141.

Belongs to the transferase hexapeptide repeat family. As to quaternary structure, homotrimer.

It localises to the cytoplasm. It catalyses the reaction (S)-2,3,4,5-tetrahydrodipicolinate + succinyl-CoA + H2O = (S)-2-succinylamino-6-oxoheptanedioate + CoA. Its pathway is amino-acid biosynthesis; L-lysine biosynthesis via DAP pathway; LL-2,6-diaminopimelate from (S)-tetrahydrodipicolinate (succinylase route): step 1/3. This Buchnera aphidicola subsp. Baizongia pistaciae (strain Bp) protein is 2,3,4,5-tetrahydropyridine-2,6-dicarboxylate N-succinyltransferase.